Consider the following 377-residue polypeptide: MKTFTDRWRQLEWDDIRLRINGKTAADVERALNAAHLSRDDLMALLSPAAADYLEPIAQRAQRLTRQRFGNTVSFYVPLYLSNLCANDCTYCGFSMSNRIKRKTLDEVDIQRECDAIRKLGFEHLLLVTGEHQAKVGMDYFRRHLPTIRRQFSSLQMEVQPLSQENYAELKTLGIDGVMVYQETYHEAIYAQHHLKGKKQDFFWRLETPDRLGRAGIDKIGLGALIGLSDNWRVDCYMVAEHLLWMQKHYWQSRYSVSFPRLRPCTGGVEPASVMDEKQLVQTICAFRLLAPEIELSLSTRESPWFRDHVIPLAINNVSAFSKTQPGGYADDHPELEQFSPHDARRPETVASALSAQGLQPVWKDWDSWLGRASQTR.

Positions 71 to 301 constitute a Radical SAM core domain; the sequence is NTVSFYVPLY…PEIELSLSTR (231 aa). [4Fe-4S] cluster contacts are provided by C85, C89, and C92.

Belongs to the radical SAM superfamily. ThiH family. In terms of assembly, forms a heterodimer with ThiG. [4Fe-4S] cluster is required as a cofactor.

It catalyses the reaction L-tyrosine + S-adenosyl-L-methionine + NADPH = 2-iminoacetate + 4-methylphenol + 5'-deoxyadenosine + L-methionine + NADP(+). It functions in the pathway cofactor biosynthesis; thiamine diphosphate biosynthesis. Its function is as follows. Catalyzes the radical-mediated cleavage of tyrosine to 2-iminoacetate and 4-cresol. The protein is 2-iminoacetate synthase (thiH) of Salmonella typhimurium (strain LT2 / SGSC1412 / ATCC 700720).